The sequence spans 129 residues: UPF0344 protein SAR0931 (129 aa).

4 helical membrane-spanning segments follow: residues 1-21 (MLHL…ATYL), 36-56 (LHMV…WILI), 67-87 (MLLT…EVSI), and 99-119 (MFWI…ILPL).

The protein belongs to the UPF0344 family.

The protein resides in the cell membrane. This chain is UPF0344 protein SAR0931, found in Staphylococcus aureus (strain MRSA252).